The sequence spans 284 residues: 2-dehydro-3-deoxyphosphooctonate aldolase (284 aa).

The protein belongs to the KdsA family.

The protein localises to the cytoplasm. It catalyses the reaction D-arabinose 5-phosphate + phosphoenolpyruvate + H2O = 3-deoxy-alpha-D-manno-2-octulosonate-8-phosphate + phosphate. It functions in the pathway carbohydrate biosynthesis; 3-deoxy-D-manno-octulosonate biosynthesis; 3-deoxy-D-manno-octulosonate from D-ribulose 5-phosphate: step 2/3. It participates in bacterial outer membrane biogenesis; lipopolysaccharide biosynthesis. The protein is 2-dehydro-3-deoxyphosphooctonate aldolase of Shigella boydii serotype 18 (strain CDC 3083-94 / BS512).